The sequence spans 231 residues: Uridylate kinase (231 aa).

Lys-9–Gly-12 contacts ATP. Gly-49 provides a ligand contact to UMP. ATP-binding residues include Gly-50 and Arg-54. Residues Asp-69 and Ala-130 to Thr-137 contribute to the UMP site. 3 residues coordinate ATP: Asn-158, Tyr-164, and Asp-167.

The protein belongs to the UMP kinase family. In terms of assembly, homohexamer.

The protein resides in the cytoplasm. It catalyses the reaction UMP + ATP = UDP + ADP. It participates in pyrimidine metabolism; CTP biosynthesis via de novo pathway; UDP from UMP (UMPK route): step 1/1. Inhibited by UTP. Its function is as follows. Catalyzes the reversible phosphorylation of UMP to UDP. This Tropheryma whipplei (strain Twist) (Whipple's bacillus) protein is Uridylate kinase.